An 86-amino-acid chain; its full sequence is Heat shock factor-binding protein (86 aa).

Residues 34-63 (MSDSIITKIDDMGGRINELEQSINDLRAEM) adopt a coiled-coil conformation. Residues 42–52 (IDDMGGRINEL) form a required for interactions with heat shock factors (HSFs) region. Positions 59–86 (LRAEMGVEGTPPPASKSGDEPKTPASSS) are disordered.

Belongs to the HSBP1 family. As to quaternary structure, homohexamer. Interacts with HSFA1A, HSFA1B and HSFA2. Mostly expressed in siliques and flowers, and, to a lower extent, in roots, stems and leaves.

The protein resides in the nucleus. It is found in the cytoplasm. Its subcellular location is the cytosol. Functionally, negative regulator of the heat shock (HS) response. Affects negatively HSFA1B DNA-binding capacity in vitro. Involved in acquired thermotolerance but not basal thermotolerance. Crucial for seed development, after fertilization and during embryogenesis. The polypeptide is Heat shock factor-binding protein (Arabidopsis thaliana (Mouse-ear cress)).